A 281-amino-acid chain; its full sequence is MSAQESCLSLIKYFLFVFNLFFFVLGSLIFCFGIWILIDKTSFVSFVGLAFVPLQIWSKVLAISGIFTMGIALLGCVGALKELRCLLGLYFGMLLLLFATQITLGILISTQRAQLERSLRDVVEKTIQKYGTNPEETAAEESWDYVQFQLRCCGWHYPQDWFQVLILRGNGSEAHRVPCSCYNLSATNDSTILDKVILPQLSRLGHLARSRHSADICAVPAESHIYREGCAQGLQKWLHNNLISIVGICLGVGLLELGFMTLSIFLCRNLDHVYNRLARYR.

Topologically, residues 1-17 (MSAQESCLSLIKYFLFV) are cytoplasmic. Residues 18 to 38 (FNLFFFVLGSLIFCFGIWILI) form a helical membrane-spanning segment. Over 39–59 (DKTSFVSFVGLAFVPLQIWSK) the chain is Extracellular. The chain crosses the membrane as a helical span at residues 60-74 (VLAISGIFTMGIALL). Residues 75–85 (GCVGALKELRC) are Cytoplasmic-facing. The helical transmembrane segment at 86-111 (LLGLYFGMLLLLFATQITLGILISTQ) threads the bilayer. The Extracellular portion of the chain corresponds to 112 to 241 (RAQLERSLRD…QGLQKWLHNN (130 aa)). N-linked (GlcNAc...) asparagine glycans are attached at residues Asn170, Asn183, and Asn188. A helical transmembrane segment spans residues 242–266 (LISIVGICLGVGLLELGFMTLSIFL). At 267–281 (CRNLDHVYNRLARYR) the chain is on the cytoplasmic side.

Belongs to the tetraspanin (TM4SF) family. In terms of assembly, interacts with SCIMP. Interacts with SOCS3. Interacts with DECTIN1/CLEC7A. In terms of processing, tyrosine phosphorylated; leading to activation of downstream signaling pathways. In terms of tissue distribution, B-lymphocytes. Antigen presenting cells.

The protein resides in the cell membrane. Functionally, structural component of specialized membrane microdomains known as tetraspanin-enriched microdomains (TERMs), which act as platforms for receptor clustering and signaling. Participates thereby in diverse biological functions such as cell signal transduction, adhesion, migration and protein trafficking. Upon ligand binding, two signaling pathways are activated, one acting through phosphorylation by LYN leading to cell death or a survival pathway with activation of GSK3B. Plays an essential role essential for clustering of integrin ITGA4/ITGB1 and promotes its mobility in the plasma membrane of B-cells. In turn, participates in ITGA4/ITGB1 integrin-mediated antiapoptotic signaling through AKT. Also plays a role in the migration of dendritic cells and neutrophils to draining lymph nodes, as well as in their integrin-mediated adhesion. Negatively regulates IL-6 responses through direct interaction with SOCS3 thereby preventing constitutive IL-6 signaling. Alternatively, inhibition of IL-6 signaling can also occur via interaction and stabilization of DECTIN1/CLEC7A at the cell membrane to inhibit its ability to promote the production of IL-6. This chain is Leukocyte antigen CD37 (CD37), found in Homo sapiens (Human).